A 449-amino-acid chain; its full sequence is N-succinylarginine dihydrolase (449 aa).

Residues 19-28 (GGLSYGNVAS), Asn-110, and 137-138 (HR) contribute to the substrate site. Positions 23–43 (YGNVASQSNSQQASNPREAAR) are disordered. Residues 27 to 37 (ASQSNSQQASN) show a composition bias toward low complexity. Residue Glu-174 is part of the active site. Arg-214 lines the substrate pocket. Residue His-250 is part of the active site. Substrate contacts are provided by Asp-252 and Asn-365. The active-site Nucleophile is Cys-371.

It belongs to the succinylarginine dihydrolase family. As to quaternary structure, homodimer.

It carries out the reaction N(2)-succinyl-L-arginine + 2 H2O + 2 H(+) = N(2)-succinyl-L-ornithine + 2 NH4(+) + CO2. It participates in amino-acid degradation; L-arginine degradation via AST pathway; L-glutamate and succinate from L-arginine: step 2/5. Catalyzes the hydrolysis of N(2)-succinylarginine into N(2)-succinylornithine, ammonia and CO(2). This is N-succinylarginine dihydrolase from Pseudomonas putida (strain ATCC 47054 / DSM 6125 / CFBP 8728 / NCIMB 11950 / KT2440).